The sequence spans 804 residues: Enhancer of polycomb homolog 2 (804 aa).

Disordered stretches follow at residues 372 to 398, 484 to 507, 602 to 623, and 642 to 669; these read QSSD…PDGS, GFSS…SDRH, QQSQ…KSDC, and NSPT…VQPS. Low complexity predominate over residues 602 to 611; the sequence is QQSQQSLQQS. Residues 654-669 are compositionally biased toward polar residues; it reads DQNAGHSNLNGVVQPS.

This sequence belongs to the enhancer of polycomb family.

The protein localises to the nucleus. May play a role in transcription or DNA repair. This is Enhancer of polycomb homolog 2 (epc2) from Xenopus tropicalis (Western clawed frog).